Reading from the N-terminus, the 508-residue chain is Pancreatic alpha-amylase 2a5 (508 aa).

A signal peptide spans 1 to 15 (MKFVLLLSLIGFCWA). The residue at position 16 (Gln16) is a Pyrrolidone carboxylic acid. Cystine bridges form between Cys43–Cys101, Cys85–Cys130, and Cys156–Cys172. Positions 115, 170, and 179 each coordinate Ca(2+). Arg207 lines the chloride pocket. Asp209 acts as the Nucleophile in catalysis. Residue His213 coordinates Ca(2+). Catalysis depends on Glu245, which acts as the Proton donor. The chloride site is built by Asn310 and Arg349. Intrachain disulfides connect Cys390–Cys396 and Cys462–Cys474.

Belongs to the glycosyl hydrolase 13 family. In terms of assembly, monomer. Ca(2+) serves as cofactor. It depends on chloride as a cofactor.

The protein resides in the secreted. It localises to the extracellular space. It catalyses the reaction Endohydrolysis of (1-&gt;4)-alpha-D-glucosidic linkages in polysaccharides containing three or more (1-&gt;4)-alpha-linked D-glucose units.. This chain is Pancreatic alpha-amylase 2a5, found in Mus musculus (Mouse).